A 257-amino-acid chain; its full sequence is 3-oxo-5-alpha-steroid 4-dehydrogenase 1 (257 aa).

A run of 6 helical transmembrane segments spans residues 7–27, 50–70, 84–104, 109–129, 149–169, and 208–228; these read FLLD…YVLL, AAWT…CAGA, ILLA…PFLI, PMPL…GYLQ, FLTG…SDHV, and ALAS…CVLF.

It belongs to the steroid 5-alpha reductase family.

It localises to the microsome membrane. It is found in the endoplasmic reticulum membrane. It catalyses the reaction a 3-oxo-5alpha-steroid + NADP(+) = a 3-oxo-Delta(4)-steroid + NADPH + H(+). It carries out the reaction 5alpha-pregnane-3,20-dione + NADP(+) = progesterone + NADPH + H(+). The catalysed reaction is 17beta-hydroxy-5alpha-androstan-3-one + NADP(+) = testosterone + NADPH + H(+). The enzyme catalyses androst-4-ene-3,17-dione + NADPH + H(+) = 5alpha-androstan-3,17-dione + NADP(+). Its function is as follows. Converts testosterone into 5-alpha-dihydrotestosterone and progesterone or corticosterone into their corresponding 5-alpha-3-oxosteroids. It plays a central role in sexual differentiation and androgen physiology. The sequence is that of 3-oxo-5-alpha-steroid 4-dehydrogenase 1 (SRD5A1) from Bos taurus (Bovine).